Consider the following 553-residue polypeptide: CTP synthase (553 aa).

The segment at 1 to 266 is amidoligase domain; it reads MTKNYIFITG…DNYICEYFKL (266 aa). Serine 14 is a binding site for CTP. Serine 14 contacts UTP. ATP contacts are provided by residues 15–20 and aspartate 72; that span reads SLGKGI. Mg(2+) contacts are provided by aspartate 72 and glutamate 140. CTP contacts are provided by residues 147–149, 187–192, and lysine 223; these read DIE and KTKPTQ. Residues 187–192 and lysine 223 contribute to the UTP site; that span reads KTKPTQ. Residue 239 to 241 coordinates ATP; that stretch reads KDV. Residues 291–544 form the Glutamine amidotransferase type-1 domain; that stretch reads IIGIIGKYIK…IKSAKKNKKN (254 aa). Position 352 (glycine 352) interacts with L-glutamine. Cysteine 379 functions as the Nucleophile; for glutamine hydrolysis in the catalytic mechanism. L-glutamine is bound by residues 380–383, glutamate 403, and arginine 472; that span reads LGMQ. Residues histidine 517 and glutamate 519 contribute to the active site.

The protein belongs to the CTP synthase family. In terms of assembly, homotetramer.

The catalysed reaction is UTP + L-glutamine + ATP + H2O = CTP + L-glutamate + ADP + phosphate + 2 H(+). The enzyme catalyses L-glutamine + H2O = L-glutamate + NH4(+). It carries out the reaction UTP + NH4(+) + ATP = CTP + ADP + phosphate + 2 H(+). It participates in pyrimidine metabolism; CTP biosynthesis via de novo pathway; CTP from UDP: step 2/2. With respect to regulation, allosterically activated by GTP, when glutamine is the substrate; GTP has no effect on the reaction when ammonia is the substrate. The allosteric effector GTP functions by stabilizing the protein conformation that binds the tetrahedral intermediate(s) formed during glutamine hydrolysis. Inhibited by the product CTP, via allosteric rather than competitive inhibition. Its function is as follows. Catalyzes the ATP-dependent amination of UTP to CTP with either L-glutamine or ammonia as the source of nitrogen. Regulates intracellular CTP levels through interactions with the four ribonucleotide triphosphates. The protein is CTP synthase of Buchnera aphidicola subsp. Schizaphis graminum (strain Sg).